The primary structure comprises 124 residues: Small ribosomal subunit protein uS12 (124 aa).

Residues 1–25 are disordered; the sequence is MPTINQLIRKPRKSQKEKTASPALQ. At aspartate 89 the chain carries 3-methylthioaspartic acid.

Belongs to the universal ribosomal protein uS12 family. In terms of assembly, part of the 30S ribosomal subunit. Contacts proteins S8 and S17. May interact with IF1 in the 30S initiation complex.

With S4 and S5 plays an important role in translational accuracy. Functionally, interacts with and stabilizes bases of the 16S rRNA that are involved in tRNA selection in the A site and with the mRNA backbone. Located at the interface of the 30S and 50S subunits, it traverses the body of the 30S subunit contacting proteins on the other side and probably holding the rRNA structure together. The combined cluster of proteins S8, S12 and S17 appears to hold together the shoulder and platform of the 30S subunit. The polypeptide is Small ribosomal subunit protein uS12 (Borrelia turicatae (strain 91E135)).